We begin with the raw amino-acid sequence, 751 residues long: Dendritic arbor reduction protein 1 (751 aa).

Residues 57–89 (NNNNTSSNNNHSSNSSSNNSNGSQTPNGNNNSS) show a composition bias toward low complexity. Disordered stretches follow at residues 57–167 (NNNN…PNSN), 248–275 (LMLSSSGSSNNNGSSNSSSNTGESATSQ), 304–351 (TEKQ…QQHL), 374–410 (LQQQHQQQQHLQHNNSSSSSPKLATPGDNSGNTSSYQ), 458–578 (SATA…AATG), and 594–639 (SAIQ…AAHI). The span at 95-125 (HQHHQFHHHLHHHHSHQHHHQHHHLHQHHSH) shows a compositional bias: basic residues. Over residues 153-167 (AQQQQLQPAGSPNSN) the composition is skewed to polar residues. Composition is skewed to low complexity over residues 251–267 (SSSGSSNNNGSSNSSSN), 309–351 (RQQQ…QQHL), and 374–393 (LQQQHQQQQHLQHNNSSSSS). Positions 400–410 (GDNSGNTSSYQ) are enriched in polar residues. Composition is skewed to low complexity over residues 458-513 (SATA…SSAS), 527-548 (DPGSPGSSMVAAAAAAAAQRRT), and 594-610 (SAIQQQQQQPQQQQVPQ). C2H2-type zinc fingers lie at residues 664-688 (HHCDFVGCSKVYTKSSHLKAHQRIH), 694-718 (YTCQWPECEWRFARSDELTRHYRKH), and 724-746 (FKCIVCERSFARSDHLALHMKRH).

Belongs to the krueppel C2H2-type zinc-finger protein family. As to expression, highly enriched in the peripheral nervous system but is absent from the central nervous system. Expressed in neurons with more than one dendrite including da neurons, bd neurons and the dmd1 neuron but undetectable in neurons with single dendrites such as external sensory organ neurons and chodonotal neurons.

The protein localises to the nucleus. In terms of biological role, transcriptional regulator which promotes dendrite growth by suppressing, either directly or indirectly, the expression of the microtubule-severing protein spas. Determines multipolar neuron morphology in postmitotic neurons by positively regulating the expression of genes involved in nuclear positioning including several dynein genes and the nuclear migration protein nudC. The chain is Dendritic arbor reduction protein 1 from Drosophila melanogaster (Fruit fly).